A 511-amino-acid polypeptide reads, in one-letter code: 2'-acyl-2-O-sulfo-trehalose (hydroxy)phthioceranyltransferase PapA1 (511 aa).

The protein belongs to the PapA acyltransferase family.

The enzyme catalyses a (hydroxy)phthioceranyl-[(hydroxy)phthioceranic acid synthase] + 2'-palmitoyl/stearoyl-2-O-sulfo-alpha,alpha-trehalose = a 3'-(hydroxy)phthioceranyl-2'-palmitoyl/stearoyl-2-O-sulfo-alpha,alpha-trehalose + holo-[(hydroxy)phthioceranic acid synthase].. Its function is as follows. Required for the biosynthesis of sulfolipid-1 (SL-1), a major mycobacterial cell wall lipid. Catalyzes the acylation of trehalose-2-sulfate-2'-palmitate (SL659) by adding the (hydroxy)phthioceranoyl group at the 3'-position to yield the diacylated intermediate 2-palmitoyl-3-(C43)-phthioceranyl-alpha, alpha'-D-trehalose-2'-sulfate (SL1278). The sequence is that of 2'-acyl-2-O-sulfo-trehalose (hydroxy)phthioceranyltransferase PapA1 (papA1) from Mycobacterium tuberculosis (strain CDC 1551 / Oshkosh).